Consider the following 492-residue polypeptide: Dipeptide permease D (492 aa).

The next 13 helical transmembrane spans lie at 14-34, 49-69, 91-111, 138-158, 167-187, 212-232, 236-256, 269-289, 312-332, 344-364, 379-399, 413-433, and 458-478; these read VVAL…LLIL, ALFS…GYLA, LVLG…AIIV, GGFS…PIAC, WAMG…IFLC, NWGW…VLFW, SVYA…RIYL, LIVV…QGGS, MFQS…AWLV, IWGK…ILTL, LMVL…PVAM, VLTG…AGVI, and VFSQ…VIWL.

It belongs to the major facilitator superfamily. Proton-dependent oligopeptide transporter (POT/PTR) (TC 2.A.17) family. DtpD subfamily.

It localises to the cell inner membrane. In terms of biological role, probable proton-dependent permease that transports dipeptides. The sequence is that of Dipeptide permease D from Klebsiella pneumoniae subsp. pneumoniae (strain ATCC 700721 / MGH 78578).